A 298-amino-acid polypeptide reads, in one-letter code: Glutamyl-Q tRNA(Asp) synthetase (298 aa).

L-glutamate contacts are provided by residues 12–16 and glutamate 48; that span reads RFAPT. The short motif at 15-25 is the 'HIGH' region element; it reads PTPSGYLHFGS. 4 residues coordinate Zn(2+): cysteine 104, cysteine 106, tyrosine 118, and cysteine 122. L-glutamate is bound by residues tyrosine 175 and arginine 193. A 'KMSKS' region motif is present at residues 231-235; sequence KLGKS. Position 234 (lysine 234) interacts with ATP.

This sequence belongs to the class-I aminoacyl-tRNA synthetase family. GluQ subfamily. Requires Zn(2+) as cofactor.

Functionally, catalyzes the tRNA-independent activation of glutamate in presence of ATP and the subsequent transfer of glutamate onto a tRNA(Asp). Glutamate is transferred on the 2-amino-5-(4,5-dihydroxy-2-cyclopenten-1-yl) moiety of the queuosine in the wobble position of the QUC anticodon. In Pseudomonas fluorescens (strain ATCC BAA-477 / NRRL B-23932 / Pf-5), this protein is Glutamyl-Q tRNA(Asp) synthetase.